A 122-amino-acid chain; its full sequence is Phosphoribosyl-ATP pyrophosphatase (122 aa).

It belongs to the PRA-PH family.

The protein localises to the cytoplasm. The enzyme catalyses 1-(5-phospho-beta-D-ribosyl)-ATP + H2O = 1-(5-phospho-beta-D-ribosyl)-5'-AMP + diphosphate + H(+). It participates in amino-acid biosynthesis; L-histidine biosynthesis; L-histidine from 5-phospho-alpha-D-ribose 1-diphosphate: step 2/9. This is Phosphoribosyl-ATP pyrophosphatase from Burkholderia thailandensis (strain ATCC 700388 / DSM 13276 / CCUG 48851 / CIP 106301 / E264).